The chain runs to 339 residues: DNA-directed RNA polymerase subunit alpha (339 aa).

The segment at 1–235 (MTIQKNWQEL…DQLNVFVNFE (235 aa)) is alpha N-terminal domain (alpha-NTD). The alpha C-terminal domain (alpha-CTD) stretch occupies residues 251–339 (FNPAFLKKVD…ELAKRFEDHY (89 aa)).

This sequence belongs to the RNA polymerase alpha chain family. In terms of assembly, homodimer. The RNAP catalytic core consists of 2 alpha, 1 beta, 1 beta' and 1 omega subunit. When a sigma factor is associated with the core the holoenzyme is formed, which can initiate transcription.

The enzyme catalyses RNA(n) + a ribonucleoside 5'-triphosphate = RNA(n+1) + diphosphate. Its function is as follows. DNA-dependent RNA polymerase catalyzes the transcription of DNA into RNA using the four ribonucleoside triphosphates as substrates. The polypeptide is DNA-directed RNA polymerase subunit alpha (Rhodopseudomonas palustris (strain BisA53)).